The chain runs to 199 residues: Protein-methionine-sulfoxide reductase heme-binding subunit MsrQ (199 aa).

5 helical membrane-spanning segments follow: residues Val13–Gly33, Leu79–Glu99, Leu120–Met140, Trp147–Trp167, and Val169–Phe189.

The protein belongs to the MsrQ family. As to quaternary structure, heterodimer of a catalytic subunit (MsrP) and a heme-binding subunit (MsrQ). The cofactor is FMN. Heme b serves as cofactor.

Its subcellular location is the cell inner membrane. Part of the MsrPQ system that repairs oxidized periplasmic proteins containing methionine sulfoxide residues (Met-O), using respiratory chain electrons. Thus protects these proteins from oxidative-stress damage caused by reactive species of oxygen and chlorine generated by the host defense mechanisms. MsrPQ is essential for the maintenance of envelope integrity under bleach stress, rescuing a wide series of structurally unrelated periplasmic proteins from methionine oxidation. MsrQ provides electrons for reduction to the reductase catalytic subunit MsrP, using the quinone pool of the respiratory chain. The polypeptide is Protein-methionine-sulfoxide reductase heme-binding subunit MsrQ (Pectobacterium carotovorum subsp. carotovorum (strain PC1)).